We begin with the raw amino-acid sequence, 100 residues long: Large ribosomal subunit protein uL23 (100 aa).

This sequence belongs to the universal ribosomal protein uL23 family. As to quaternary structure, part of the 50S ribosomal subunit. Contacts protein L29, and trigger factor when it is bound to the ribosome.

Its function is as follows. One of the early assembly proteins it binds 23S rRNA. One of the proteins that surrounds the polypeptide exit tunnel on the outside of the ribosome. Forms the main docking site for trigger factor binding to the ribosome. The protein is Large ribosomal subunit protein uL23 of Pseudoalteromonas atlantica (strain T6c / ATCC BAA-1087).